The sequence spans 250 residues: Adenosylcobinamide-GDP ribazoletransferase (250 aa).

The next 6 helical transmembrane spans lie at 32-52, 59-79, 113-133, 136-156, 185-205, and 230-250; these read KGII…MVAY, LAHS…TGGL, GVLA…GLGE, IYWG…YGCY, LTFI…LLPI, and CELT…AGLF.

It belongs to the CobS family. Requires Mg(2+) as cofactor.

It is found in the cell membrane. The enzyme catalyses alpha-ribazole + adenosylcob(III)inamide-GDP = adenosylcob(III)alamin + GMP + H(+). It catalyses the reaction alpha-ribazole 5'-phosphate + adenosylcob(III)inamide-GDP = adenosylcob(III)alamin 5'-phosphate + GMP + H(+). It participates in cofactor biosynthesis; adenosylcobalamin biosynthesis; adenosylcobalamin from cob(II)yrinate a,c-diamide: step 7/7. Functionally, joins adenosylcobinamide-GDP and alpha-ribazole to generate adenosylcobalamin (Ado-cobalamin). Also synthesizes adenosylcobalamin 5'-phosphate from adenosylcobinamide-GDP and alpha-ribazole 5'-phosphate. The chain is Adenosylcobinamide-GDP ribazoletransferase from Alkaliphilus metalliredigens (strain QYMF).